A 150-amino-acid chain; its full sequence is Ribonuclease K6 (150 aa).

An N-terminal signal peptide occupies residues 1-23; it reads MVLCFPLLLLLLVLWGPVCLLHA. H38 serves as the catalytic Proton acceptor. Cystine bridges form between C46-C104, C60-C114, C78-C129, and C85-C92. N55 carries N-linked (GlcNAc...) asparagine glycosylation. Residues 61-65 and K86 contribute to the substrate site; that span reads KHQNT. N100 carries an N-linked (GlcNAc...) asparagine glycan. A substrate-binding site is contributed by R105. Residue H145 is the Proton donor of the active site.

Belongs to the pancreatic ribonuclease family. In terms of assembly, interacts (via N-terminus) with bacterial lipopolysaccharide (LPS).

Its subcellular location is the secreted. The protein localises to the lysosome. It is found in the cytoplasmic granule. Functionally, ribonuclease which shows a preference for the pyrimidines uridine and cytosine. Has potent antibacterial activity against a range of Gram-positive and Gram-negative bacteria, including P.aeruginosa, A.baumanii, M.luteus, S.aureus, E.faecalis, E.faecium, S.saprophyticus and E.coli. Causes loss of bacterial membrane integrity, and also promotes agglutination of Gram-negative bacteria. Probably contributes to urinary tract sterility. Bactericidal activity is independent of RNase activity. The chain is Ribonuclease K6 (RNASE6) from Macaca mulatta (Rhesus macaque).